The chain runs to 420 residues: UDP-N-acetylglucosamine 1-carboxyvinyltransferase (420 aa).

22–23 contributes to the phosphoenolpyruvate binding site; sequence KN. R92 serves as a coordination point for UDP-N-acetyl-alpha-D-glucosamine. The Proton donor role is filled by C116. Residue C116 is modified to 2-(S-cysteinyl)pyruvic acid O-phosphothioketal. UDP-N-acetyl-alpha-D-glucosamine-binding positions include 121–125, D307, and L329; that span reads RPIDL.

The protein belongs to the EPSP synthase family. MurA subfamily.

It is found in the cytoplasm. The catalysed reaction is phosphoenolpyruvate + UDP-N-acetyl-alpha-D-glucosamine = UDP-N-acetyl-3-O-(1-carboxyvinyl)-alpha-D-glucosamine + phosphate. It participates in cell wall biogenesis; peptidoglycan biosynthesis. Functionally, cell wall formation. Adds enolpyruvyl to UDP-N-acetylglucosamine. The polypeptide is UDP-N-acetylglucosamine 1-carboxyvinyltransferase (Nitratiruptor sp. (strain SB155-2)).